We begin with the raw amino-acid sequence, 340 residues long: Phosphate acyltransferase (340 aa).

This sequence belongs to the PlsX family. In terms of assembly, homodimer. Probably interacts with PlsY.

It localises to the cytoplasm. The enzyme catalyses a fatty acyl-[ACP] + phosphate = an acyl phosphate + holo-[ACP]. It functions in the pathway lipid metabolism; phospholipid metabolism. Its function is as follows. Catalyzes the reversible formation of acyl-phosphate (acyl-PO(4)) from acyl-[acyl-carrier-protein] (acyl-ACP). This enzyme utilizes acyl-ACP as fatty acyl donor, but not acyl-CoA. This chain is Phosphate acyltransferase, found in Nitrosococcus oceani (strain ATCC 19707 / BCRC 17464 / JCM 30415 / NCIMB 11848 / C-107).